A 162-amino-acid polypeptide reads, in one-letter code: Zinc finger protein 593 homolog (162 aa).

Residues 59-83 (FYCVHCAKYFIDDTAMQAHFRTKVH) form a C2H2-type zinc finger. Residues 110 to 162 (VKPKKRAMETQPSKEDVVAGKRIRVEVVPEDTDATDSPSTSKTKRKKVEKMET) form a disordered region. Basic and acidic residues predominate over residues 115-136 (RAMETQPSKEDVVAGKRIRVEV). Over residues 151–162 (KTKRKKVEKMET) the composition is skewed to basic residues.

Belongs to the ZNF593/BUD20 C2H2-type zinc-finger protein family. In terms of assembly, associates with pre-60S ribosomal particles; released from the pre-60S particle very early in the cytoplasm.

It is found in the nucleus. The protein resides in the cytoplasm. Involved in pre-60S ribosomal particles maturation by promoting the nuclear export of the 60S ribosome. The polypeptide is Zinc finger protein 593 homolog (Drosophila melanogaster (Fruit fly)).